Reading from the N-terminus, the 289-residue chain is Inorganic pyrophosphatase (289 aa).

Ser2 is modified (N-acetylserine). Lys57 is modified (N6-acetyllysine). Mg(2+) contacts are provided by Asp116, Asp121, and Asp153. Ser250 carries the post-translational modification Phosphoserine.

The protein belongs to the PPase family. As to quaternary structure, homodimer. The cofactor is Mg(2+). The N-terminus is blocked. Highest levels are found in retinal rod outer segments.

It is found in the cytoplasm. The enzyme catalyses diphosphate + H2O = 2 phosphate + H(+). The chain is Inorganic pyrophosphatase (PPA1) from Bos taurus (Bovine).